The following is a 256-amino-acid chain: Peroxisomal membrane protein PMP30B (256 aa).

It belongs to the peroxin-11 family.

It localises to the peroxisome membrane. In terms of biological role, involved in peroxisomal proliferation. Could participate in peroxisomal elongation or fission. May be involved in parceling of peroxisomes into regular quanta. The protein is Peroxisomal membrane protein PMP30B (PEX11B) of Candida boidinii (Yeast).